The sequence spans 185 residues: Transcription factor E (185 aa).

Residues 5-88 enclose the HTH TFE/IIEalpha-type domain; it reads KNKELLEIAQ…YWRLETKKLP (84 aa).

The protein belongs to the TFE family. Monomer. Interaction with RNA polymerase subunits RpoF and RpoE is necessary for Tfe stimulatory transcription activity. Able to interact with Tbp and RNA polymerase in the absence of DNA promoter. Interacts both with the preinitiation and elongation complexes.

Transcription factor that plays a role in the activation of archaeal genes transcribed by RNA polymerase. Facilitates transcription initiation by enhancing TATA-box recognition by TATA-box-binding protein (Tbp), and transcription factor B (Tfb) and RNA polymerase recruitment. Not absolutely required for transcription in vitro, but particularly important in cases where Tbp or Tfb function is not optimal. It dynamically alters the nucleic acid-binding properties of RNA polymerases by stabilizing the initiation complex and destabilizing elongation complexes. Seems to translocate with the RNA polymerase following initiation and acts by binding to the non template strand of the transcription bubble in elongation complexes. This is Transcription factor E from Thermococcus kodakarensis (strain ATCC BAA-918 / JCM 12380 / KOD1) (Pyrococcus kodakaraensis (strain KOD1)).